Reading from the N-terminus, the 1976-residue chain is Myosin-10 (1976 aa).

Position 18 is an omega-N-methylarginine (Arg-18). The region spanning 31–81 is the Myosin N-terminal SH3-like domain; the sequence is TAKKLVWIPSERHGFEAASIKEERGDEVMVELAENGKKAMVNKDDIQKMNP. The Myosin motor domain maps to 85–783; that stretch reads SKVEDMAELT…VLAHLEEERD (699 aa). 178–185 is an ATP binding site; sequence GESGAGKT. The residue at position 214 (Leu-214) is a Phosphoserine. Lys-442 carries the post-translational modification N6-acetyllysine. Residues 661–683 are actin-binding; it reads LTKLMATLRNTNPNFVRCIIPNH. In terms of domain architecture, IQ spans 786–815; it reads ITDIIIFFQAVCRGYLARKAFAKKQQQLSA. Positions 845–1976 form a coiled coil; that stretch reads LQVTRQEEEL…VNETQPPQSE (1132 aa). Residues 1127 to 1147 form a disordered region; that stretch reads FESEKASRNKAEKQKRDLSEE. The span at 1129 to 1147 shows a compositional bias: basic and acidic residues; it reads SEKASRNKAEKQKRDLSEE. Residue Ser-1145 is modified to Phosphoserine. Residues Lys-1241, Lys-1301, and Lys-1645 each carry the N6-acetyllysine modification. Disordered regions lie at residues 1697-1728 and 1872-1976; these read ASSE…SALL and MEKA…PQSE. Residues 1698–1708 show a composition bias toward basic and acidic residues; sequence SSERARRHAEQ. Arg-1930 bears the Omega-N-methylarginine mark. Phosphoserine occurs at positions 1935, 1937, 1938, and 1939. An Omega-N-methylarginine modification is found at Arg-1940. Phosphoserine is present on residues Ser-1952 and Ser-1956. Phosphothreonine is present on Thr-1960. Residues 1967–1976 are compositionally biased toward polar residues; sequence VNETQPPQSE. The residue at position 1975 (Ser-1975) is a Phosphoserine.

Belongs to the TRAFAC class myosin-kinesin ATPase superfamily. Myosin family. In terms of assembly, myosin is a hexameric protein that consists of 2 heavy chain subunits (MHC), 2 alkali light chain subunits (MLC) and 2 regulatory light chain subunits (MLC-2). Interacts with PLEKHG6. Interacts with ECPAS. Interacts with KIF26B. Interacts with LARP6. Interacts with MCC. Interacts with CFAP95. (Microbial infection) Interacts with herpes simplex virus 1/HHV-1 envelope glycoprotein B. Phosphorylated by ABL2. Isoform 1 is expressed in cerebellum and spinal chord. Isoform 2 is expressed in cerebrum and retina. Isoform 3 is expressed in the cerebrum and to a much lower extent in cerebellum.

Its subcellular location is the cell projection. The protein resides in the lamellipodium. It localises to the cell membrane. In terms of biological role, cellular myosin that appears to play a role in cytokinesis, cell shape, and specialized functions such as secretion and capping. Involved with LARP6 in the stabilization of type I collagen mRNAs for CO1A1 and CO1A2. During cell spreading, plays an important role in cytoskeleton reorganization, focal contacts formation (in the central part but not the margins of spreading cells), and lamellipodial extension; this function is mechanically antagonized by MYH9. Its function is as follows. (Microbial infection) Acts as a receptor for herpes simplex virus 1/HHV-1 envelope glycoprotein B. The sequence is that of Myosin-10 (MYH10) from Homo sapiens (Human).